The sequence spans 137 residues: Holo-[acyl-carrier-protein] synthase (137 aa).

Mg(2+)-binding residues include Asp8 and Glu61.

Belongs to the P-Pant transferase superfamily. AcpS family. Mg(2+) serves as cofactor.

It is found in the cytoplasm. The enzyme catalyses apo-[ACP] + CoA = holo-[ACP] + adenosine 3',5'-bisphosphate + H(+). Transfers the 4'-phosphopantetheine moiety from coenzyme A to a Ser of acyl-carrier-protein. The polypeptide is Holo-[acyl-carrier-protein] synthase (Afipia carboxidovorans (strain ATCC 49405 / DSM 1227 / KCTC 32145 / OM5) (Oligotropha carboxidovorans)).